Consider the following 151-residue polypeptide: HTH-type transcriptional regulator FL11 (151 aa).

In terms of domain architecture, HTH asnC-type spans 5 to 66 (LDEIDRRIIK…IVNPEALGYS (62 aa)). The H-T-H motif DNA-binding region spans 24–43 (LREISKITGLAESTIHERIK). 98 to 104 (ETTGDYD) contacts L-arginine. Residues Asn118, Asp122, and 133–135 (THT) each bind L-lysine. L-arginine contacts are provided by residues Asp122 and 133–135 (THT).

In terms of assembly, homodimer. Binds DNA as a dimer and an octamer.

In the famine mode, FL11 forms dimers and acts as a repressor, leading to growth arrest. In the feast mode, in the presence of high concentrations of lysine or arginine, four dimers assemble into an octamer and cover the fl11 and lysine biosynthesis promoters. This leads to the inhibition of fl11 expression and lysine biosynthesis, decrease of the FL11 concentration in the cell, derepression of the target genes and activation of the metabolism. DNA-binding protein involved in the repression of transcription of a large number of genes, thereby arresting growth, in response to environmental changes. This is HTH-type transcriptional regulator FL11 from Pyrococcus abyssi (strain GE5 / Orsay).